Consider the following 231-residue polypeptide: Sugar fermentation stimulation protein homolog (231 aa).

Belongs to the SfsA family.

The sequence is that of Sugar fermentation stimulation protein homolog from Geobacter sp. (strain M21).